The chain runs to 442 residues: Large ribosomal subunit protein mL65 (442 aa).

The protein belongs to the mitochondrion-specific ribosomal protein mL65 family. As to quaternary structure, component of the mitochondrial ribosome small subunit (28S) which comprises a 12S rRNA and about 30 distinct proteins.

The protein resides in the mitochondrion. The sequence is that of Large ribosomal subunit protein mL65 (Mrps30) from Mus musculus (Mouse).